We begin with the raw amino-acid sequence, 143 residues long: Large ribosomal subunit protein uL11 (143 aa).

This sequence belongs to the universal ribosomal protein uL11 family. In terms of assembly, part of the ribosomal stalk of the 50S ribosomal subunit. Interacts with L10 and the large rRNA to form the base of the stalk. L10 forms an elongated spine to which L12 dimers bind in a sequential fashion forming a multimeric L10(L12)X complex. In terms of processing, one or more lysine residues are methylated.

Its function is as follows. Forms part of the ribosomal stalk which helps the ribosome interact with GTP-bound translation factors. The chain is Large ribosomal subunit protein uL11 from Beutenbergia cavernae (strain ATCC BAA-8 / DSM 12333 / CCUG 43141 / JCM 11478 / NBRC 16432 / NCIMB 13614 / HKI 0122).